We begin with the raw amino-acid sequence, 537 residues long: Pentatricopeptide repeat-containing protein At4g32450, mitochondrial (537 aa).

A mitochondrion-targeting transit peptide spans 1-110 (MIYTLTRGSL…EHSEIINQRN (110 aa)). The span at 113-140 (WQSSDGCSSYGTTGNGVPQENNTGGNHF) shows a compositional bias: polar residues. A disordered region spans residues 113–148 (WQSSDGCSSYGTTGNGVPQENNTGGNHFQQDHSGHS). PPR repeat units lie at residues 145 to 179 (SGHSSLDELDSICREGKVKKAVEIIKSWRNEGYVV), 180 to 210 (DLPRLFWIAQLCGDAQALQEAKVVHEFITSS), 215 to 249 (DISAYNSIIEMYSGCGSVEDALTVFNSMPERNLET), 250 to 280 (WCGVIRCFAKNGQGEDAIDTFSRFKQEGNKP), 281 to 316 (DGEMFKEIFFACGVLGDMNEGLLHFESMYKEYGIIP), and 317 to 347 (CMEHYVSLVKMLAEPGYLDEALRFVESMEPN). Positions 412–442 (YGIRYMAAGDISRPENRELYMALKSLKEHMI) are type E(+) motif. A type DYW motif region spans residues 443–537 (EIGYVPLSKL…DGVCSCREYW (95 aa)).

The protein belongs to the PPR family. PCMP-H subfamily.

It is found in the mitochondrion. This Arabidopsis thaliana (Mouse-ear cress) protein is Pentatricopeptide repeat-containing protein At4g32450, mitochondrial (PCMP-H63).